A 131-amino-acid polypeptide reads, in one-letter code: Profilin-2 (131 aa).

The protein belongs to the profilin family. In terms of assembly, occurs in many kinds of cells as a complex with monomeric actin in a 1:1 ratio.

It is found in the cytoplasm. The protein localises to the cytoskeleton. Its function is as follows. Binds to actin and affects the structure of the cytoskeleton. At high concentrations, profilin prevents the polymerization of actin, whereas it enhances it at low concentrations. By binding to PIP2, it inhibits the formation of IP3 and DG. The sequence is that of Profilin-2 (PRO2) from Triticum aestivum (Wheat).